The following is a 222-amino-acid chain: Adenylate kinase (222 aa).

Residue 16–21 (GAGKGT) participates in ATP binding. The segment at 36–65 (ATGDMLRSQISKGTELGLQAKKIMDQGGLV) is NMP. AMP contacts are provided by residues threonine 37, arginine 42, 63-65 (GLV), 92-95 (GFPR), and glutamine 99. The interval 133 to 170 (GRLIHPASGRSYHKLFNPPKEDMKDDVTGEPLVQRSDD) is LID. ATP contacts are provided by residues arginine 134 and 143–144 (SY). Arginine 167 and arginine 178 together coordinate AMP. Glutamine 206 is an ATP binding site.

This sequence belongs to the adenylate kinase family. AK2 subfamily. In terms of assembly, monomer.

Its subcellular location is the cytoplasm. The protein resides in the cytosol. It is found in the mitochondrion intermembrane space. It carries out the reaction AMP + ATP = 2 ADP. In terms of biological role, catalyzes the reversible transfer of the terminal phosphate group between ATP and AMP. Plays an important role in cellular energy homeostasis and in adenine nucleotide metabolism. Adenylate kinase activity is critical for regulation of the phosphate utilization and the AMP de novo biosynthesis pathways. This is Adenylate kinase from Candida glabrata (strain ATCC 2001 / BCRC 20586 / JCM 3761 / NBRC 0622 / NRRL Y-65 / CBS 138) (Yeast).